A 559-amino-acid chain; its full sequence is D-2-hydroxyglutarate dehydrogenase, mitochondrial (559 aa).

Residues 1–78 constitute a mitochondrion transit peptide; sequence MMMQKLRRSG…GMLLQQYKCF (78 aa). The FAD-binding PCMH-type domain maps to 130-309; that stretch reads YKGSSKLMLL…TKVSILTQPK (180 aa).

It belongs to the FAD-binding oxidoreductase/transferase type 4 family. Homodimer. It depends on FAD as a cofactor.

Its subcellular location is the mitochondrion. The enzyme catalyses (R)-2-hydroxyglutarate + A = 2-oxoglutarate + AH2. Functionally, catalyzes the oxidation of (R)-2-hydroxyglutarate to 2-oxoglutarate. May be involved in the catabolism of propionyl-CoA derived from beta-oxidation. Involved in degradation of lysine for the supply of carbon and electrons to the ETF/ETFQO complex during dark-induced sugar starvation. In Arabidopsis thaliana (Mouse-ear cress), this protein is D-2-hydroxyglutarate dehydrogenase, mitochondrial (D2HGDH).